Here is a 180-residue protein sequence, read N- to C-terminus: Putative 3-methyladenine DNA glycosylase (180 aa).

It belongs to the DNA glycosylase MPG family.

The polypeptide is Putative 3-methyladenine DNA glycosylase (Wolbachia pipientis wMel).